The primary structure comprises 323 residues: Putative HTH-type transcriptional regulatory protein Mbur_1811 (323 aa).

The HTH cro/C1-type domain occupies 132-190; it reads LKEARMNVSMSLGALASELGVSRRTISKYEEGQMDASIDIVLHLEEILDMALAKSIDIL. The segment at residues 143-162 is a DNA-binding region (H-T-H motif); sequence LGALASELGVSRRTISKYEE.

This chain is Putative HTH-type transcriptional regulatory protein Mbur_1811, found in Methanococcoides burtonii (strain DSM 6242 / NBRC 107633 / OCM 468 / ACE-M).